The primary structure comprises 285 residues: DNA repair protein RecO (285 aa).

It belongs to the RecO family.

Involved in DNA repair and RecF pathway recombination. The polypeptide is DNA repair protein RecO (Synechococcus sp. (strain JA-2-3B'a(2-13)) (Cyanobacteria bacterium Yellowstone B-Prime)).